Reading from the N-terminus, the 477-residue chain is MSPQTETKASVGFKAGVKDYKLTYYTPEYETKDTDILAAFRVSPQPGVPPEEAGAAVAAESSTGTWTTVWTDGLTSLDRYKGRCYHIEPVAGEDSQWICYVAYPLDLFEEGSVTNMFTSIVGNVFGFKALRALRLEDLRIPPAYTKTFQGPPHGIQVERDKLNKYGRPLLGCTIKPKLGLSAKNYGRACYECLRGGLDFTKDDENVNSQPFMRWRDRFVFCAEAIYKAQAETGEIKGHYLNATAGTCEEMIKRAVFARELGVPIVMHDYITGGFTANTSLAHYCRDNGLLLHIHRAMHAVIDRQKNHGMHFRVLAKALRMSGGDHIHAGTVVGKLEGEREMTLGFVDLLRDDFIEKDRARGIFFTQDWVSMPGVIPVASGGIHVWHMPALTEIFGDDSVLQFGGGTLGHPWGNAPGAAANRVALEACVQARNEGRDLAREGNEIIRAACKWSPELAAACEVWKAIKFEFEPVDTIDK.

Residues 1–2 (MS) constitute a propeptide that is removed on maturation. Proline 3 is subject to N-acetylproline. At lysine 14 the chain carries N6,N6,N6-trimethyllysine. Substrate contacts are provided by asparagine 123 and threonine 173. The active-site Proton acceptor is lysine 175. Lysine 177 provides a ligand contact to substrate. Mg(2+) contacts are provided by lysine 201, aspartate 203, and glutamate 204. N6-carboxylysine is present on lysine 201. The Proton acceptor role is filled by histidine 294. Residues arginine 295, histidine 327, and serine 379 each contribute to the substrate site.

The protein belongs to the RuBisCO large chain family. Type I subfamily. As to quaternary structure, heterohexadecamer of 8 large chains and 8 small chains; disulfide-linked. The disulfide link is formed within the large subunit homodimers. It depends on Mg(2+) as a cofactor. The disulfide bond which can form in the large chain dimeric partners within the hexadecamer appears to be associated with oxidative stress and protein turnover.

It is found in the plastid. It localises to the chloroplast. The catalysed reaction is 2 (2R)-3-phosphoglycerate + 2 H(+) = D-ribulose 1,5-bisphosphate + CO2 + H2O. It carries out the reaction D-ribulose 1,5-bisphosphate + O2 = 2-phosphoglycolate + (2R)-3-phosphoglycerate + 2 H(+). Functionally, ruBisCO catalyzes two reactions: the carboxylation of D-ribulose 1,5-bisphosphate, the primary event in carbon dioxide fixation, as well as the oxidative fragmentation of the pentose substrate in the photorespiration process. Both reactions occur simultaneously and in competition at the same active site. The chain is Ribulose bisphosphate carboxylase large chain from Agrostis stolonifera (Creeping bentgrass).